Consider the following 467-residue polypeptide: Neuromedin-K receptor (467 aa).

The Extracellular segment spans residues 1-86; the sequence is MDSFAAAETW…TNQFVQPSWR (86 aa). 3 N-linked (GlcNAc...) asparagine glycosylation sites follow: asparagine 23, asparagine 50, and asparagine 75. A helical membrane pass occupies residues 87-109; the sequence is IALWSLAYGVVVAVAVFGNLIVI. The Cytoplasmic segment spans residues 110 to 119; it reads WIILAHKRMR. Residues 120-141 form a helical membrane-spanning segment; that stretch reads TVTNYFLVNLAFSDASMAAFNT. At 142–161 the chain is on the extracellular side; that stretch reads LVNFIYALHSEWYFGANYCR. Cysteine 160 and cysteine 235 are oxidised to a cystine. The chain crosses the membrane as a helical span at residues 162-183; it reads FQNFFPITAVFASIYSMTAIAV. Residues 184-203 are Cytoplasmic-facing; that stretch reads DRYMAIIDPLKPRLSATATK. Residues 204–224 form a helical membrane-spanning segment; sequence IVIGSIWILAFLLALPQCLYS. Topologically, residues 225–247 are extracellular; sequence KTKVMPGRTLCYVQWPEGPKQHF. Residues 248–272 traverse the membrane as a helical segment; sequence IYHIIVIILVYCFPLLIMGITYTIV. At 273–301 the chain is on the cytoplasmic side; that stretch reads GITLWGGEIPGDTCDKYHEQLKAKRKVVK. Residues 302 to 323 traverse the membrane as a helical segment; the sequence is MMIIVVVTFAICWLPYHIYFIL. The Extracellular segment spans residues 324–336; it reads TAIYQQLNRWKYI. A helical membrane pass occupies residues 337-361; it reads QQVYLASFWLAMSSTMYNPIIYCCL. The Cytoplasmic portion of the chain corresponds to 362–467; it reads NKRFRAGFKR…SPYTSMEEYS (106 aa). Cysteine 376 carries the S-palmitoyl cysteine lipid modification. Residues 416–467 are disordered; that stretch reads DPSDADNTRSSRKKRATPGDPNFNGCSRRNSKSASTTSSFISSPYTSMEEYS. Residues 447-467 show a composition bias toward low complexity; it reads KSASTTSSFISSPYTSMEEYS.

It belongs to the G-protein coupled receptor 1 family.

The protein localises to the cell membrane. This is a receptor for the tachykinin neuropeptide neuromedin-K (neurokinin B). It is associated with G proteins that activate a phosphatidylinositol-calcium second messenger system. In Oryctolagus cuniculus (Rabbit), this protein is Neuromedin-K receptor (TACR3).